Here is a 477-residue protein sequence, read N- to C-terminus: Myc-associated zinc finger protein (477 aa).

Disordered stretches follow at residues A59–A78 and T121–E146. The segment covering P130–S141 has biased composition (pro residues). C2H2-type zinc fingers lie at residues Y190–H212, H279–H301, Y307–H329, and Y337–H360. S361 bears the Phosphoserine mark. The C2H2-type 5 zinc finger occupies F366–H388. The segment at V392–H413 adopts a C2H2-type 6; atypical zinc-finger fold.

As to quaternary structure, interacts with BPTF. Forms a heterodimer with MAZ isoform 2; the interaction inhibits MAZ isoform 1-mediated transcription activation. In terms of assembly, forms a heterodimer with MAZ isoform 1; the interaction inhibits MAZ isoform 1-mediated transcription activation. As to expression, present in kidney, liver and brain. In the brain, highest levels are found in motor cortex and midfrontal cortex (at protein level). In terms of tissue distribution, expressed in the heart, brain, placenta, lung, liver, skeletal muscle and weakly expressed in the kidney. Expressed in the joint synovium.

It is found in the nucleus. Transcriptional regulator, potentially with dual roles in transcription initiation and termination. In terms of biological role, binds DNA and functions as a transcriptional activator. Binds to two G/A-rich sites, ME1a1 and ME1a2, within the MYC promoter having greater affinity for the former. Also binds to multiple G/C-rich sites within the promoter of the Sp1 family of transcription factors. Its function is as follows. Binds DNA and functions as a transcriptional activator. Inhibits MAZ isoform 1-mediated transcription. Functionally, binds DNA and functions as a transcriptional activator. This chain is Myc-associated zinc finger protein (MAZ), found in Homo sapiens (Human).